We begin with the raw amino-acid sequence, 62 residues long: Negative regulatory protein YxlE (62 aa).

2 consecutive transmembrane segments (helical) span residues 7-27 and 37-57; these read MILP…ISCI and WMWA…FFTV.

The protein localises to the cell membrane. In terms of biological role, together with YxlD is important for negative regulation of sigma Y activity. This is Negative regulatory protein YxlE (yxlE) from Bacillus subtilis (strain 168).